Reading from the N-terminus, the 98-residue chain is NADH-ubiquinone oxidoreductase chain 4L (98 aa).

Helical transmembrane passes span 1–21, 29–49, and 61–81; these read MTMVYANIFLAFITSLMGLLM, SLLCLEGMMLSLFVMMTVTIL, and IVLLVFAACEAALGLSLLVMV.

The protein belongs to the complex I subunit 4L family. As to quaternary structure, core subunit of respiratory chain NADH dehydrogenase (Complex I) which is composed of 45 different subunits.

The protein resides in the mitochondrion inner membrane. The enzyme catalyses a ubiquinone + NADH + 5 H(+)(in) = a ubiquinol + NAD(+) + 4 H(+)(out). Core subunit of the mitochondrial membrane respiratory chain NADH dehydrogenase (Complex I) which catalyzes electron transfer from NADH through the respiratory chain, using ubiquinone as an electron acceptor. Part of the enzyme membrane arm which is embedded in the lipid bilayer and involved in proton translocation. The polypeptide is NADH-ubiquinone oxidoreductase chain 4L (MT-ND4L) (Monachus monachus (Mediterranean monk seal)).